Reading from the N-terminus, the 553-residue chain is Putative transport protein AHA_3492 (553 aa).

5 consecutive transmembrane segments (helical) span residues 4 to 24 (IALS…LGNW), 29 to 49 (VGLG…FAGL), 65 to 85 (FGLI…FFSS), 95 to 115 (GFAA…HQLF), and 158 to 178 (MGYA…MWLI). RCK C-terminal domains follow at residues 191 to 276 (AQFE…VLGE) and 279 to 361 (ETSL…VVGN). Helical transmembrane passes span 371–391 (MLPV…PFYL), 403–425 (AGGP…LYWF), 439–459 (IVLF…DTLI), 465–485 (AWMM…GVLA), 493–513 (YLTL…LAFA), and 533–553 (LVMF…WAGA).

This sequence belongs to the AAE transporter (TC 2.A.81) family. YidE subfamily.

It is found in the cell membrane. This is Putative transport protein AHA_3492 from Aeromonas hydrophila subsp. hydrophila (strain ATCC 7966 / DSM 30187 / BCRC 13018 / CCUG 14551 / JCM 1027 / KCTC 2358 / NCIMB 9240 / NCTC 8049).